Reading from the N-terminus, the 437-residue chain is Phosphomethylpyrimidine synthase (437 aa).

Residues asparagine 69, methionine 98, tyrosine 127, histidine 163, 185 to 187 (SRG), 226 to 229 (DACR), and glutamate 265 contribute to the substrate site. Histidine 269 serves as a coordination point for Zn(2+). Substrate is bound at residue tyrosine 292. A Zn(2+)-binding site is contributed by histidine 333. Residues cysteine 409, cysteine 412, and cysteine 416 each coordinate [4Fe-4S] cluster.

Belongs to the ThiC family. Requires [4Fe-4S] cluster as cofactor.

It catalyses the reaction 5-amino-1-(5-phospho-beta-D-ribosyl)imidazole + S-adenosyl-L-methionine = 4-amino-2-methyl-5-(phosphooxymethyl)pyrimidine + CO + 5'-deoxyadenosine + formate + L-methionine + 3 H(+). The protein operates within cofactor biosynthesis; thiamine diphosphate biosynthesis. Its function is as follows. Catalyzes the synthesis of the hydroxymethylpyrimidine phosphate (HMP-P) moiety of thiamine from aminoimidazole ribotide (AIR) in a radical S-adenosyl-L-methionine (SAM)-dependent reaction. The polypeptide is Phosphomethylpyrimidine synthase (Clostridium botulinum (strain 657 / Type Ba4)).